We begin with the raw amino-acid sequence, 155 residues long: SsrA-binding protein (155 aa).

The protein belongs to the SmpB family.

It is found in the cytoplasm. Functionally, required for rescue of stalled ribosomes mediated by trans-translation. Binds to transfer-messenger RNA (tmRNA), required for stable association of tmRNA with ribosomes. tmRNA and SmpB together mimic tRNA shape, replacing the anticodon stem-loop with SmpB. tmRNA is encoded by the ssrA gene; the 2 termini fold to resemble tRNA(Ala) and it encodes a 'tag peptide', a short internal open reading frame. During trans-translation Ala-aminoacylated tmRNA acts like a tRNA, entering the A-site of stalled ribosomes, displacing the stalled mRNA. The ribosome then switches to translate the ORF on the tmRNA; the nascent peptide is terminated with the 'tag peptide' encoded by the tmRNA and targeted for degradation. The ribosome is freed to recommence translation, which seems to be the essential function of trans-translation. The protein is SsrA-binding protein of Halothermothrix orenii (strain H 168 / OCM 544 / DSM 9562).